The following is a 523-amino-acid chain: Polypyrimidine tract-binding protein 3 (523 aa).

Residues 1-25 (MNNSTSAGVYANGNDNKKFKGDRPP) form a disordered region. RRM domains are found at residues 30–114 (RVLH…NLPN), 153–229 (LRII…FSKL), and 329–403 (SVLL…LSKH). Residue Lys-36 forms a Glycyl lysine isopeptide (Lys-Gly) (interchain with G-Cter in SUMO2) linkage. Tyr-98 is modified (phosphotyrosine). Residue Thr-109 is modified to Phosphothreonine. Lys-187 is covalently cross-linked (Glycyl lysine isopeptide (Lys-Gly) (interchain with G-Cter in SUMO2)). At Lys-394 the chain carries N6-acetyllysine. Residues 406-426 (VQLPREGQEDQGLTKDFSNSP) form a disordered region. Ser-425 bears the Phosphoserine mark. Residues 446-521 (ATLHLSNIPP…HHLRVSFSKS (76 aa)) form the RRM 4 domain.

Interacts with THBS4 (via the acidic amphipathic C-terminus). As to expression, detected specifically in spleen, thymus, lungs, and bone marrow.

RNA-binding protein that mediates pre-mRNA alternative splicing regulation. Plays a role in the regulation of cell proliferation, differentiation and migration. Positive regulator of EPO-dependent erythropoiesis. Participates in cell differentiation regulation by repressing tissue-specific exons. Promotes Fas exon 6 skipping. Binds RNA, preferentially to both poly(G) and poly(U). The chain is Polypyrimidine tract-binding protein 3 (Ptbp3) from Rattus norvegicus (Rat).